A 168-amino-acid polypeptide reads, in one-letter code: Cyclic pyranopterin monophosphate synthase (168 aa).

Substrate is bound by residues 83-85 (LCH) and 121-122 (ME). Asp136 is a catalytic residue.

It belongs to the MoaC family. As to quaternary structure, homohexamer; trimer of dimers.

The catalysed reaction is (8S)-3',8-cyclo-7,8-dihydroguanosine 5'-triphosphate = cyclic pyranopterin phosphate + diphosphate. It functions in the pathway cofactor biosynthesis; molybdopterin biosynthesis. Catalyzes the conversion of (8S)-3',8-cyclo-7,8-dihydroguanosine 5'-triphosphate to cyclic pyranopterin monophosphate (cPMP). In Nostoc sp. (strain PCC 7120 / SAG 25.82 / UTEX 2576), this protein is Cyclic pyranopterin monophosphate synthase.